A 279-amino-acid chain; its full sequence is Probable endonuclease 4 (279 aa).

Zn(2+)-binding residues include histidine 69, histidine 109, glutamate 145, aspartate 179, histidine 182, histidine 216, aspartate 229, histidine 231, and glutamate 261.

This sequence belongs to the AP endonuclease 2 family. It depends on Zn(2+) as a cofactor.

The enzyme catalyses Endonucleolytic cleavage to 5'-phosphooligonucleotide end-products.. Functionally, endonuclease IV plays a role in DNA repair. It cleaves phosphodiester bonds at apurinic or apyrimidinic (AP) sites, generating a 3'-hydroxyl group and a 5'-terminal sugar phosphate. This chain is Probable endonuclease 4, found in Tolumonas auensis (strain DSM 9187 / NBRC 110442 / TA 4).